The chain runs to 571 residues: Potassium-transporting ATPase potassium-binding subunit (571 aa).

A run of 11 helical transmembrane segments spans residues 5 to 25, 64 to 84, 136 to 156, 179 to 199, 254 to 274, 285 to 305, 330 to 350, 357 to 376, 421 to 441, 488 to 508, and 527 to 547; these read GWIQ…PLGS, LAYT…LYAI, GLTH…VALI, LYVL…QGIP, LSNL…TNVF, WAIL…TYWA, FGIA…CGAV, FTAL…EIII, MLGI…ATVV, LAIG…AIAG, and GGLF…LTFF.

This sequence belongs to the KdpA family. As to quaternary structure, the system is composed of three essential subunits: KdpA, KdpB and KdpC.

Its subcellular location is the cell inner membrane. Part of the high-affinity ATP-driven potassium transport (or Kdp) system, which catalyzes the hydrolysis of ATP coupled with the electrogenic transport of potassium into the cytoplasm. This subunit binds the periplasmic potassium ions and delivers the ions to the membrane domain of KdpB through an intramembrane tunnel. The chain is Potassium-transporting ATPase potassium-binding subunit from Methylobacterium radiotolerans (strain ATCC 27329 / DSM 1819 / JCM 2831 / NBRC 15690 / NCIMB 10815 / 0-1).